A 373-amino-acid chain; its full sequence is Plasmepsin VIII (373 aa).

The first 21 residues, 1–21 (MNKFFVFPLLLILNSIVLVKS), serve as a signal peptide directing secretion. Residues 50–370 (FIGEISIGNP…EKDNMRIGLA (321 aa)) enclose the Peptidase A1 domain. Residues Asp68 and Asp258 contribute to the active site.

The protein belongs to the peptidase A1 family.

Functionally, during the development in the mosquito vector, plays an essential role in sporozoite egress from the oocyst and sporozoite gliding motility, which is required for the invasion of salivary glands and subsequent transmission to the host. The sequence is that of Plasmepsin VIII from Plasmodium berghei (strain Anka).